Here is a 141-residue protein sequence, read N- to C-terminus: MNYQKIYNDLISRAQAREPLSEYKETHHIIPRCMGGSDDKENLVELTAREHFIAHAILSKIYPVKSVIFAFFMMCNMKGTKKRHYKVHSKIYAHAKKLNSQFRKGTVISEETRLKMSKSENRSAFNRRNQTQNIGGNQRKG.

The interval 115–141 (KMSKSENRSAFNRRNQTQNIGGNQRKG) is disordered. A compositionally biased stretch (polar residues) spans 122–141 (RSAFNRRNQTQNIGGNQRKG).

The sequence is that of Probable mobile endonuclease E (mobE) from Escherichia coli (Bacteriophage T4).